The following is an 817-amino-acid chain: Actin filament-associated protein 1-like 2 (817 aa).

Tyr-56 carries the post-translational modification Phosphotyrosine. The tract at residues 63–164 (HKQQNAESQD…KGKSAPHQWP (102 aa)) is disordered. Positions 123-139 (YYEEAEPYDTSLNEDGE) are enriched in acidic residues. PH domains lie at 175–271 (DARI…EVSG) and 353–447 (SLET…SESG). At Ser-408 the chain carries Phosphoserine. Tyr-413 is subject to Phosphotyrosine. At Ser-484 the chain carries Phosphoserine. Low complexity predominate over residues 512–528 (TTAGEAPEEATPATDAP). Disordered regions lie at residues 512–657 (TTAG…KLGK) and 754–786 (GTTV…VNSA). The stretch at 652 to 748 (EIKLGKNRTE…VKDSLRKAEA (97 aa)) forms a coiled coil. The span at 754–763 (GTTVDTTHLE) shows a compositional bias: polar residues. Residues 767-782 (PRPKAATPTPAPDCTP) show a composition bias toward low complexity.

As to quaternary structure, interacts with SRC. Interacts with LCK when tyrosine phosphorylated. Post-translationally, tyrosine phosphorylated (by SRC).

The protein localises to the cytoplasm. Functionally, may play a role in a signaling cascade by enhancing the kinase activity of SRC. Contributes to SRC-regulated transcription activation. This Bos taurus (Bovine) protein is Actin filament-associated protein 1-like 2 (AFAP1L2).